Here is a 384-residue protein sequence, read N- to C-terminus: Putative exopolyphosphatase (384 aa).

Mn(2+)-binding residues include aspartate 40, aspartate 42, aspartate 116, histidine 138, and aspartate 200.

Belongs to the PPase class C family. Requires Mn(2+) as cofactor.

The catalysed reaction is [phosphate](n) + H2O = [phosphate](n-1) + phosphate + H(+). Functionally, degradation of inorganic polyphosphates. This Schizosaccharomyces pombe (strain 972 / ATCC 24843) (Fission yeast) protein is Putative exopolyphosphatase.